The sequence spans 96 residues: Large ribosomal subunit protein uL23 (96 aa).

This sequence belongs to the universal ribosomal protein uL23 family. Part of the 50S ribosomal subunit. Contacts protein L29, and trigger factor when it is bound to the ribosome.

In terms of biological role, one of the early assembly proteins it binds 23S rRNA. One of the proteins that surrounds the polypeptide exit tunnel on the outside of the ribosome. Forms the main docking site for trigger factor binding to the ribosome. The protein is Large ribosomal subunit protein uL23 of Alkaliphilus oremlandii (strain OhILAs) (Clostridium oremlandii (strain OhILAs)).